Consider the following 801-residue polypeptide: Glycerol-3-phosphate acyltransferase 2, mitochondrial (801 aa).

Residues 1–24 (METMLKSNPQMQQRNNHSGQETSL) are disordered. The Cytoplasmic portion of the chain corresponds to 1-305 (METMLKSNPQ…PGPRLSALGQ (305 aa)). Positions 180–290 (QLHKGQMKMV…SGQPLLIFLE (111 aa)) are acyltransferase. Residues 205–210 (HKSLLD) carry the HXXXXD motif motif. Residues 306–332 (AWLGLVVQAVQAGIVPDATLVPVATAY) form a helical membrane-spanning segment. The Mitochondrial intermembrane portion of the chain corresponds to 333–449 (DLVPDAPCNM…QLLVRRLSRH (117 aa)). Residues 450 to 472 (VLSASVASSAVMSTAIMATLLLL) form a helical membrane-spanning segment. The Cytoplasmic segment spans residues 473–795 (KHQKGVVLSQ…DNQDKLEQFI (323 aa)).

Belongs to the GPAT/DAPAT family. In terms of assembly, interacts with PIWIL2. In terms of tissue distribution, expressed in spermatocytes and spermatides.

It is found in the mitochondrion outer membrane. The catalysed reaction is sn-glycerol 3-phosphate + an acyl-CoA = a 1-acyl-sn-glycero-3-phosphate + CoA. It carries out the reaction a 1-acyl-sn-glycero-3-phosphate + an acyl-CoA = a 1,2-diacyl-sn-glycero-3-phosphate + CoA. The enzyme catalyses 1-(9Z-octadecenoyl)-sn-glycero-3-phosphate + (9Z)-octadecenoyl-CoA = 1,2-di-(9Z-octadecenoyl)-sn-glycero-3-phosphate + CoA. It catalyses the reaction 1-(9Z-octadecenoyl)-sn-glycero-3-phosphate + (5Z,8Z,11Z,14Z)-eicosatetraenoyl-CoA = 1-(9Z)-octadecenoyl-2-(5Z,8Z,11Z,14Z)-eicosatetraenoyl-sn-glycero-3-phosphate + CoA. The catalysed reaction is (5Z,8Z,11Z,14Z)-eicosatetraenoyl-CoA + sn-glycerol 3-phosphate = 1-(5Z,8Z,11Z,14Z-eicosatetraenoyl)-sn-glycero-3-phosphate + CoA. It participates in phospholipid metabolism; CDP-diacylglycerol biosynthesis; CDP-diacylglycerol from sn-glycerol 3-phosphate: step 1/3. Its activity is regulated as follows. Inhibited by N-ethylmaleimide (NEM). Its function is as follows. Transfers an acyl-group from acyl-ACP to the sn-1 position of glycerol-3-phosphate producing a lysophosphatidic acid (LPA), an essential step for the triacylglycerol (TAG) and glycerophospholipids. In vitro also transfers an acyl-group from acyl-ACP to the LPA producing a phosphatidic acid (PA). Prefers arachidonoyl-CoA as the acyl donor. Required for primary processing step during piRNA biosynthesis. Molecular mechanisms by which it promotes piRNA biosynthesis are unclear and do not involve its acyltransferase activity. The sequence is that of Glycerol-3-phosphate acyltransferase 2, mitochondrial from Rattus norvegicus (Rat).